A 179-amino-acid chain; its full sequence is Large ribosomal subunit protein uL5 (179 aa).

The protein belongs to the universal ribosomal protein uL5 family. Part of the 50S ribosomal subunit; part of the 5S rRNA/L5/L18/L25 subcomplex. Contacts the 5S rRNA and the P site tRNA. Forms a bridge to the 30S subunit in the 70S ribosome.

Its function is as follows. This is one of the proteins that bind and probably mediate the attachment of the 5S RNA into the large ribosomal subunit, where it forms part of the central protuberance. In the 70S ribosome it contacts protein S13 of the 30S subunit (bridge B1b), connecting the 2 subunits; this bridge is implicated in subunit movement. Contacts the P site tRNA; the 5S rRNA and some of its associated proteins might help stabilize positioning of ribosome-bound tRNAs. The polypeptide is Large ribosomal subunit protein uL5 (Caldanaerobacter subterraneus subsp. tengcongensis (strain DSM 15242 / JCM 11007 / NBRC 100824 / MB4) (Thermoanaerobacter tengcongensis)).